Consider the following 401-residue polypeptide: (1R,4R,5S)-(-)-guaia-6,10(14)-diene synthase (401 aa).

Mg(2+)-binding residues include Asp134 and Glu139. Residues 134 to 138 (DDQFD) carry the DDXXD motif motif. Arg242 is a substrate binding site. Residues Asn288 and Ser292 each coordinate Mg(2+). Position 295 (Lys295) interacts with substrate. Mg(2+) is bound at residue Asp296. Substrate is bound at residue 375–376 (RY).

Belongs to the terpene synthase family. Requires Mg(2+) as cofactor.

The catalysed reaction is (2E,6E)-farnesyl diphosphate = (1R,4R,5S)-(-)-guaia-6,10(14)-diene + diphosphate. Its pathway is secondary metabolite biosynthesis; terpenoid biosynthesis. Its function is as follows. Catalyzes the conversion of (2E,6E)-farnesyl diphosphate (FPP) to yield the bicyclic sesquiterpene guaia-6,10(14)-diene via a 1,10-cyclization, which requires the abstraction of the pyrophosphate from FPP to yield the (E,E)-germacradienyl cation. The only accepted substrate is farnesyl diphosphate (FPP). The protein is (1R,4R,5S)-(-)-guaia-6,10(14)-diene synthase of Fusarium mangiferae (Mango malformation disease fungus).